The following is a 136-amino-acid chain: Large ribosomal subunit protein uL16 (136 aa).

Belongs to the universal ribosomal protein uL16 family. Part of the 50S ribosomal subunit.

Its function is as follows. Binds 23S rRNA and is also seen to make contacts with the A and possibly P site tRNAs. This chain is Large ribosomal subunit protein uL16, found in Vibrio campbellii (strain ATCC BAA-1116).